The sequence spans 159 residues: Phosphopantetheine adenylyltransferase (159 aa).

Threonine 9 is a binding site for substrate. ATP is bound by residues 9-10 and histidine 17; that span reads TF. Positions 41, 73, and 87 each coordinate substrate. Residues 88–90, glutamate 98, and 123–129 contribute to the ATP site; these read GLR and YSFISST.

This sequence belongs to the bacterial CoaD family. In terms of assembly, homohexamer. Mg(2+) serves as cofactor.

The protein resides in the cytoplasm. The enzyme catalyses (R)-4'-phosphopantetheine + ATP + H(+) = 3'-dephospho-CoA + diphosphate. Its pathway is cofactor biosynthesis; coenzyme A biosynthesis; CoA from (R)-pantothenate: step 4/5. Functionally, reversibly transfers an adenylyl group from ATP to 4'-phosphopantetheine, yielding dephospho-CoA (dPCoA) and pyrophosphate. The polypeptide is Phosphopantetheine adenylyltransferase (Pseudomonas syringae pv. tomato (strain ATCC BAA-871 / DC3000)).